The primary structure comprises 217 residues: PRELI domain-containing protein 1, mitochondrial (217 aa).

Positions 36-174 (TEDIVHREVT…ILAKLQGEAP (139 aa)) constitute a PRELI/MSF1 domain.

In terms of assembly, forms a complex with TRIAP1 in the mitochondrion intermembrane space. Interacts with OPA1 and AIFM1. As to expression, abundantly expressed in all tissues tested except testis with highest levels in thymus.

The protein resides in the mitochondrion. The protein localises to the mitochondrion intermembrane space. The enzyme catalyses a 1,2-diacyl-sn-glycero-3-phosphate(in) = a 1,2-diacyl-sn-glycero-3-phosphate(out). Involved in the modulation of the mitochondrial apoptotic pathway by ensuring the accumulation of cardiolipin (CL) in mitochondrial membranes. In vitro, the TRIAP1:PRELID1 complex mediates the transfer of phosphatidic acid (PA) between liposomes and probably functions as a PA transporter across the mitochondrion intermembrane space to provide PA for CL synthesis in the inner membrane. Regulates the mitochondrial apoptotic pathway in primary Th cells. Regulates Th cell differentiation by down-regulating STAT6 thereby reducing IL-4-induced Th2 cell number. May be important for the development of vital and immunocompetent organs. The sequence is that of PRELI domain-containing protein 1, mitochondrial (Prelid1) from Mus musculus (Mouse).